Here is a 237-residue protein sequence, read N- to C-terminus: NAD-dependent protein deacylase (237 aa).

A Deacetylase sirtuin-type domain is found at 1-235; sequence MRVAVLSGAG…PGLLERLPAL (235 aa). Residue 8–28 coordinates NAD(+); it reads GAGISAESGVPTFRDDKNGLW. Tyrosine 53 and arginine 56 together coordinate substrate. 86-89 contacts NAD(+); the sequence is QNVD. The active-site Proton acceptor is the histidine 104. Residues cysteine 112, cysteine 115, cysteine 138, and cysteine 140 each contribute to the Zn(2+) site. Residues 177 to 179, 203 to 205, and alanine 221 contribute to the NAD(+) site; these read GTS and NPE.

It belongs to the sirtuin family. Class III subfamily. Zn(2+) is required as a cofactor.

It localises to the cytoplasm. It carries out the reaction N(6)-acetyl-L-lysyl-[protein] + NAD(+) + H2O = 2''-O-acetyl-ADP-D-ribose + nicotinamide + L-lysyl-[protein]. It catalyses the reaction N(6)-succinyl-L-lysyl-[protein] + NAD(+) + H2O = 2''-O-succinyl-ADP-D-ribose + nicotinamide + L-lysyl-[protein]. Functionally, NAD-dependent lysine deacetylase and desuccinylase that specifically removes acetyl and succinyl groups on target proteins. Modulates the activities of several proteins which are inactive in their acylated form. In Mycobacterium bovis (strain ATCC BAA-935 / AF2122/97), this protein is NAD-dependent protein deacylase.